We begin with the raw amino-acid sequence, 463 residues long: ATP-dependent protease ATPase subunit HslU (463 aa).

ATP contacts are provided by residues I19 and 61-66 (GVGKTE). Positions 154–175 (FGGNQNSNQTSDAQEDDEIEKK) are disordered. The segment covering 156–165 (GNQNSNQTSD) has biased composition (polar residues). ATP is bound by residues D277, E341, and R413.

This sequence belongs to the ClpX chaperone family. HslU subfamily. As to quaternary structure, a double ring-shaped homohexamer of HslV is capped on each side by a ring-shaped HslU homohexamer. The assembly of the HslU/HslV complex is dependent on binding of ATP.

The protein localises to the cytoplasm. In terms of biological role, ATPase subunit of a proteasome-like degradation complex; this subunit has chaperone activity. The binding of ATP and its subsequent hydrolysis by HslU are essential for unfolding of protein substrates subsequently hydrolyzed by HslV. HslU recognizes the N-terminal part of its protein substrates and unfolds these before they are guided to HslV for hydrolysis. In Bacillus mycoides (strain KBAB4) (Bacillus weihenstephanensis), this protein is ATP-dependent protease ATPase subunit HslU.